The following is a 405-amino-acid chain: L-carnitine CoA-transferase (405 aa).

CoA is bound by residues K97 and R104. The active-site Nucleophile is D169.

It belongs to the CoA-transferase III family. CaiB subfamily. In terms of assembly, homodimer.

The protein localises to the cytoplasm. The enzyme catalyses crotonobetainyl-CoA + (R)-carnitine = crotonobetaine + (R)-carnitinyl-CoA. It carries out the reaction 4-(trimethylamino)butanoyl-CoA + (R)-carnitine = (R)-carnitinyl-CoA + 4-(trimethylamino)butanoate. The protein operates within amine and polyamine metabolism; carnitine metabolism. Its function is as follows. Catalyzes the reversible transfer of the CoA moiety from gamma-butyrobetainyl-CoA to L-carnitine to generate L-carnitinyl-CoA and gamma-butyrobetaine. Is also able to catalyze the reversible transfer of the CoA moiety from gamma-butyrobetainyl-CoA or L-carnitinyl-CoA to crotonobetaine to generate crotonobetainyl-CoA. The sequence is that of L-carnitine CoA-transferase from Escherichia coli O139:H28 (strain E24377A / ETEC).